The following is a 386-amino-acid chain: Methionine aminopeptidase 1 (386 aa).

Position 2 is an N-acetylalanine (A2). The C6H2-type zinc-finger motif lies at 6 to 59 (TRVCETDGCSSEAKLQCPTCIKLGIQGSYFCSQECFKGSWATHKLLHKKAKDEK). The Zn(2+) site is built by C9, C14, C22, C25, C36, C40, H48, H52, and K53. Residue H203 participates in a protein binding. Zn(2+) contacts are provided by D220, D231, and H294. H301 is an a protein binding site. Zn(2+) is bound by residues E327 and E358.

Belongs to the peptidase M24A family. Methionine aminopeptidase type 1 subfamily. In terms of assembly, associates with the 60S ribosomal subunit of the 80S translational complex. Zn(2+) serves as cofactor. Requires Co(2+) as cofactor. It depends on Mn(2+) as a cofactor. Fe(2+) is required as a cofactor.

Its subcellular location is the cytoplasm. The enzyme catalyses Release of N-terminal amino acids, preferentially methionine, from peptides and arylamides.. Its function is as follows. Cotranslationally removes the N-terminal methionine from nascent proteins. The N-terminal methionine is often cleaved when the second residue in the primary sequence is small and uncharged (Met-Ala-, Cys, Gly, Pro, Ser, Thr, or Val). The chain is Methionine aminopeptidase 1 (Metap1) from Mus musculus (Mouse).